The sequence spans 432 residues: E3 ubiquitin-protein ligase RNF135 (432 aa).

The RING-type zinc-finger motif lies at 21–63 (CIICQGLLDWPATLPCGHSFCRHCLEALWGARDARRWACPTCR). Residues 95 to 121 (GSDPAHCPCPGSSSLSSAAARPRRRPE) form a disordered region. A compositionally biased stretch (low complexity) spans 102-114 (PCPGSSSLSSAAA). Coiled-coil stretches lie at residues 121–156 (ELQR…QNQR) and 191–216 (DTAA…ESVT). Residues 241–432 (PDQSHPALRR…NYLIIKQVKV (192 aa)) enclose the B30.2/SPRY domain.

In terms of assembly, homodimer. Interacts (homodimer) with RIGI (double-stranded RNA-bound oligomeric form); involved in both RIGI ubiquitination, oligomerization into filaments associated with viral RNAs and the bridging of these filaments. Interacts with UBE2D3 and UBE2N; E2 ubiquitin ligases involved in RNF135-mediated ubiquitination of RIGI and activation of the RIG-I signaling pathway. Interacts with PCBP2. Post-translationally, (Microbial infection) Cleaved and inactivated by hepatitis C virus NS3/NS4A. In terms of tissue distribution, expressed in skeletal muscle, spleen, kidney, placenta, prostate, stomach, thyroid and tongue. Also weakly expressed in heart, thymus, liver and lung.

It is found in the cytoplasm. Its subcellular location is the stress granule. It catalyses the reaction S-ubiquitinyl-[E2 ubiquitin-conjugating enzyme]-L-cysteine + [acceptor protein]-L-lysine = [E2 ubiquitin-conjugating enzyme]-L-cysteine + N(6)-ubiquitinyl-[acceptor protein]-L-lysine.. The protein operates within protein modification; protein ubiquitination. In terms of biological role, E2-dependent E3 ubiquitin-protein ligase that functions as a RIGI coreceptor in the sensing of viral RNAs in cell cytoplasm and the activation of the antiviral innate immune response. Together with the UBE2D3, UBE2N and UB2V1 E2 ligases, catalyzes the 'Lys-63'-linked polyubiquitination of RIGI oligomerized on viral RNAs, an essential step in the activation of the RIG-I signaling pathway. Through a ubiquitin-independent parallel mechanism, which consists in bridging RIGI filaments forming on longer viral RNAs, further activates the RIG-I signaling pathway. This second mechanism that synergizes with the ubiquitin-dependent one would thereby allow an RNA length-dependent regulation of the RIG-I signaling pathway. Associated with the E2 ligase UBE2N, also constitutively synthesizes unanchored 'Lys-63'-linked polyubiquitin chains that may also activate the RIG-I signaling pathway. In Homo sapiens (Human), this protein is E3 ubiquitin-protein ligase RNF135.